We begin with the raw amino-acid sequence, 341 residues long: Glycerol-3-phosphate dehydrogenase [NAD(P)+] (341 aa).

Positions 14, 15, 35, and 108 each coordinate NADPH. Sn-glycerol 3-phosphate-binding residues include lysine 108 and glycine 136. Position 140 (alanine 140) interacts with NADPH. Residues lysine 191, aspartate 244, serine 254, arginine 255, and asparagine 256 each coordinate sn-glycerol 3-phosphate. The active-site Proton acceptor is the lysine 191. Arginine 255 is a binding site for NADPH. The NADPH site is built by valine 279 and glutamate 281.

This sequence belongs to the NAD-dependent glycerol-3-phosphate dehydrogenase family.

It is found in the cytoplasm. The enzyme catalyses sn-glycerol 3-phosphate + NAD(+) = dihydroxyacetone phosphate + NADH + H(+). The catalysed reaction is sn-glycerol 3-phosphate + NADP(+) = dihydroxyacetone phosphate + NADPH + H(+). The protein operates within membrane lipid metabolism; glycerophospholipid metabolism. Catalyzes the reduction of the glycolytic intermediate dihydroxyacetone phosphate (DHAP) to sn-glycerol 3-phosphate (G3P), the key precursor for phospholipid synthesis. The protein is Glycerol-3-phosphate dehydrogenase [NAD(P)+] of Pseudomonas entomophila (strain L48).